Here is a 634-residue protein sequence, read N- to C-terminus: Endoribonuclease rege-1 (634 aa).

Disordered regions lie at residues 1–33 (MDST…STPH), 90–113 (SHPS…APMI), and 156–223 (KMGL…NPDP). Basic and acidic residues predominate over residues 97–106 (ESSDPSKIDD). 2 stretches are compositionally biased toward low complexity: residues 182-194 (SSAS…SSSS) and 201-217 (SVSI…STPS). The RNase NYN domain maps to 225–377 (LRAVVVDGSN…PSGRHGPRIE (153 aa)). Asp314 is a Mg(2+) binding site. The C3H1-type zinc-finger motif lies at 387-412 (SSNPLVCPYARKCTYGNKCKFYHPER).

The protein belongs to the ZC3H12 family. Mg(2+) serves as cofactor. Expressed in the intestinal cells adjacent to the pharynx.

It localises to the cytoplasm. Endonuclease which binds to the 3'UTR of target mRNAs and induces degradation of the transcript. Acts together with rle-1 to repress the expression of the transcription factor ets-4 by binding to the conserved ADE (alternate decay element) and RCE (REGE-1 cleavage element) stem loop structure in its 3'UTR, which controls the expression of genes in the IIS and TORC1 pathways, including those involved in lipid metabolism and autophagosome formation. May play a role in the clearance of apoptotic cell corpses. This Caenorhabditis elegans protein is Endoribonuclease rege-1.